Here is a 412-residue protein sequence, read N- to C-terminus: Translation initiation factor 2 subunit gamma (412 aa).

Residues 8-205 (QAEMNIGMVG…AMYEHFEPPE (198 aa)) enclose the tr-type G domain. The interval 17–24 (GHVDHGKT) is G1. Residues Asp20, Thr24, Gly45, and Ser47 each contribute to the Mg(2+) site. GTP is bound at residue 20 to 25 (DHGKTT). A G2 region spans residues 45-49 (GISIR). Zn(2+)-binding residues include Cys60, Cys63, Cys72, and Cys75. Residues 89 to 92 (DSPG) are G3. GTP is bound by residues 145 to 148 (NKID) and 183 to 185 (SAQ). Residues 145–148 (NKID) are G4. Residues 183–185 (SAQ) form a G5 region.

Belongs to the TRAFAC class translation factor GTPase superfamily. Classic translation factor GTPase family. EIF2G subfamily. Heterotrimer composed of an alpha, a beta and a gamma chain. Mg(2+) serves as cofactor.

It carries out the reaction GTP + H2O = GDP + phosphate + H(+). Functionally, eIF-2 functions in the early steps of protein synthesis by forming a ternary complex with GTP and initiator tRNA. This is Translation initiation factor 2 subunit gamma from Methanopyrus kandleri (strain AV19 / DSM 6324 / JCM 9639 / NBRC 100938).